The chain runs to 532 residues: All-trans-retinyl ester 13-cis isomerohydrolase (532 aa).

C112 carries S-palmitoyl cysteine; in membrane form lipidation. 3 residues coordinate Fe cation: H180, H241, and H313. The S-palmitoyl cysteine; in membrane form moiety is linked to residue C329. H527 is a binding site for Fe cation.

This sequence belongs to the carotenoid oxygenase family. Fe(2+) serves as cofactor. In terms of processing, palmitoylated. In terms of tissue distribution, predominantly expressed in brain. Expressed at a low level in the eye.

The protein localises to the cytoplasm. It is found in the cell membrane. The enzyme catalyses an all-trans-retinyl ester + H2O = 13-cis-retinol + a fatty acid + H(+). It carries out the reaction lutein = (3R,3'S)-zeaxanthin. Its function is as follows. Specifically generates 13-cis retinol, a stereoisomeric form of retinoic acid. Capable of catalyzing the isomerization of lutein to meso-zeaxanthin an eye-specific carotenoid. This Danio rerio (Zebrafish) protein is All-trans-retinyl ester 13-cis isomerohydrolase (rpe65b).